We begin with the raw amino-acid sequence, 220 residues long: Putative tyrosine-protein phosphatase 1 (220 aa).

The 152-residue stretch at 67–218 folds into the Tyrosine-protein phosphatase domain; that stretch reads FKVPLNAELF…LLARKHVRGQ (152 aa).

The protein belongs to the protein-tyrosine phosphatase family. Non-receptor class CDC14 subfamily.

It catalyses the reaction O-phospho-L-tyrosyl-[protein] + H2O = L-tyrosyl-[protein] + phosphate. In terms of biological role, could be inactive as the active site cysteine is modified to tryptophan. The protein is Putative tyrosine-protein phosphatase 1 (PTP-1) of Orgyia pseudotsugata multicapsid polyhedrosis virus (OpMNPV).